A 307-amino-acid polypeptide reads, in one-letter code: Ribonuclease Z (307 aa).

Zn(2+) is bound by residues histidine 63, histidine 65, aspartate 67, histidine 68, histidine 141, aspartate 212, and histidine 270. Residue aspartate 67 is the Proton acceptor of the active site.

Belongs to the RNase Z family. In terms of assembly, homodimer. Requires Zn(2+) as cofactor.

It carries out the reaction Endonucleolytic cleavage of RNA, removing extra 3' nucleotides from tRNA precursor, generating 3' termini of tRNAs. A 3'-hydroxy group is left at the tRNA terminus and a 5'-phosphoryl group is left at the trailer molecule.. In terms of biological role, zinc phosphodiesterase, which displays some tRNA 3'-processing endonuclease activity. Probably involved in tRNA maturation, by removing a 3'-trailer from precursor tRNA. In Bacillus cereus (strain G9842), this protein is Ribonuclease Z.